A 174-amino-acid chain; its full sequence is UPF0340 protein SAR2202 (174 aa).

It belongs to the UPF0340 family.

The sequence is that of UPF0340 protein SAR2202 from Staphylococcus aureus (strain MRSA252).